The chain runs to 572 residues: Proteinaceous RNase P 1, chloroplastic/mitochondrial (572 aa).

A chloroplast and mitochondrion-targeting transit peptide spans 1–70; that stretch reads MLRLTCFTPS…SRHLCTLPLA (70 aa). 4 PPR repeats span residues 96 to 130, 136 to 174, 175 to 209, and 210 to 244; these read PEALLKQKLDMCSKKGDVLEALRLYDEARRNGVQL, NVLLYVCSLAEAATESSPNPGLSRGFDIFKQMIVDKVVP, NEATFTNGARLAVAKDDPEMAFDMVKQMKAFGIQP, and RLRSYGPALFGFCRKGDADKAYEVDAHMVESEVVP. The region spanning 338–565 is the PRORP domain; that stretch reads MDENGVCKCC…DLQTSRQWLC (228 aa). 2 residues coordinate Zn(2+): Cys-344 and Cys-347. The Mn(2+) site is built by Asp-399, Asp-474, Asp-475, and Asp-493. 2 residues coordinate Zn(2+): His-548 and Cys-565.

Belongs to the PPR family. P subfamily. The cofactor is Mg(2+). It depends on Mn(2+) as a cofactor.

The protein localises to the mitochondrion. It is found in the plastid. Its subcellular location is the chloroplast. The enzyme catalyses Endonucleolytic cleavage of RNA, removing 5'-extranucleotides from tRNA precursor.. Functionally, endonuclease RNase P responsible for the 5' maturation of tRNA precursors. Preferentially cleaves at the unusual cleavage site, but also able to cleave at the classical cleavage site. Also involved in the maturation of mRNAs in mitochondria. The sequence is that of Proteinaceous RNase P 1, chloroplastic/mitochondrial (PRORP1) from Arabidopsis thaliana (Mouse-ear cress).